The following is a 37-amino-acid chain: M-oxotoxin-Ot2a (37 aa).

As to expression, expressed by the venom gland.

The protein resides in the secreted. Disrupts biological membranes, particularly those rich in phosphocholine. Has antimicrobial activity against Gram-negative bacterium E.coli, Gram-positive bacteria B.subtilis and S.aureus, and hemolytic activity against sheep, pig and guinea pig red blood cells. Has insecticidal activity against S.frugiperda ovarian cells by opening non-selective ion channels. Enhances the insecticidal activity of spider venom neurotoxic peptides. The protein is M-oxotoxin-Ot2a of Oxyopes takobius (Lynx spider).